The sequence spans 338 residues: Stage V sporulation protein AD (338 aa).

This is Stage V sporulation protein AD (spoVAD) from Bacillus subtilis (strain 168).